A 675-amino-acid chain; its full sequence is Metal-nicotianamine transporter YSL3 (675 aa).

The next 14 membrane-spanning stretches (helical) occupy residues 42-62 (ITFRGIVASLIIGIIYSVIVM), 66-86 (LTTGLVPNLNVSAALLAFVFL), 114-134 (CAVACYSIAVGGGFGSYLLGL), 159-179 (GIGWMTAFLFFTCFVGLLALV), 219-239 (VFGFVKYFSFSFIWAFFQWFF), 280-300 (IVNISLLFGAVLSWGIMWPLI), 325-345 (VFISISLILGDGLYQFIKILF), 386-406 (IPLWVAAVGYAAFSVVSIIAI), 408-428 (IMFPELKWYFIVVAYMLAPSL), 450-470 (VALFILAAMAGKQNGVVAGLV), 504-524 (VSQAIGTAIGCVVAPLTFFLF), 556-576 (FSALPQHCLQLCYGFFAFAVA), 602-622 (FLVGGYFAIDMCVGSLIVFAW), and 630-650 (AGLMVPAVASGLICGDGLWIL).

This sequence belongs to the YSL (TC 2.A.67.2) family. Expressed in leaves, anthers and pollen grains. Restricted to the vasculature.

Its subcellular location is the membrane. Its function is as follows. May be involved in the lateral transport of nicotianamine-chelated metals in the vasculature. This chain is Metal-nicotianamine transporter YSL3 (YSL3), found in Arabidopsis thaliana (Mouse-ear cress).